Here is a 409-residue protein sequence, read N- to C-terminus: Aquaporin-10 (409 aa).

Disordered stretches follow at residues 1-24 (MADA…TTMP) and 47-74 (ADVN…RPLV). A compositionally biased stretch (low complexity) spans 12–22 (TTGTATTAPTT). 2 helical membrane passes run 110-130 (FLGS…VVLS) and 138-158 (LSIN…AGGI). An NPA 1 motif is present at residues 164–166 (NPA). Residues 184-204 (VYMFAQYAGCICASAIVHAIY) form a helical membrane-spanning segment. A glycan (N-linked (GlcNAc...) asparagine) is linked at Asn-215. 2 helical membrane passes run 241–261 (TGLA…LALT) and 270–290 (GGVV…AYGF). The short motif at 297-299 (NPA) is the NPA 2 element. Residues 339-359 (IPVVGPHLGALLGAAIYFFFI) traverse the membrane as a helical segment.

The protein belongs to the MIP/aquaporin (TC 1.A.8) family.

It is found in the cell membrane. In terms of biological role, aquaglyceroporin that may modulate the water content and osmolytes during anhydrobiosis. The sequence is that of Aquaporin-10 from Milnesium tardigradum (Water bear).